We begin with the raw amino-acid sequence, 389 residues long: Chalcone synthase 2 (389 aa).

The active site involves C164.

This sequence belongs to the thiolase-like superfamily. Chalcone/stilbene synthases family.

It carries out the reaction (E)-4-coumaroyl-CoA + 3 malonyl-CoA + 3 H(+) = 2',4,4',6'-tetrahydroxychalcone + 3 CO2 + 4 CoA. It functions in the pathway secondary metabolite biosynthesis; flavonoid biosynthesis. Its function is as follows. The primary product of this enzyme is 4,2',4',6'-tetrahydroxychalcone (also termed naringenin-chalcone or chalcone) which can under specific conditions spontaneously isomerize into naringenin. This Trifolium subterraneum (Subterranean clover) protein is Chalcone synthase 2 (CHS2).